A 377-amino-acid chain; its full sequence is Nitric oxide reductase FlRd-NAD(+) reductase (377 aa).

It belongs to the FAD-dependent oxidoreductase family. FAD is required as a cofactor.

Its subcellular location is the cytoplasm. It catalyses the reaction 2 reduced [nitric oxide reductase rubredoxin domain] + NAD(+) + H(+) = 2 oxidized [nitric oxide reductase rubredoxin domain] + NADH. The protein operates within nitrogen metabolism; nitric oxide reduction. Functionally, one of at least two accessory proteins for anaerobic nitric oxide (NO) reductase. Reduces the rubredoxin moiety of NO reductase. In Shigella flexneri serotype 5b (strain 8401), this protein is Nitric oxide reductase FlRd-NAD(+) reductase.